The following is a 323-amino-acid chain: tRNA dimethylallyltransferase (323 aa).

Residue 15 to 22 (GATGSGKT) coordinates ATP. 17–22 (TGSGKT) provides a ligand contact to substrate. Interaction with substrate tRNA regions lie at residues 40–43 (DSRQ) and 164–168 (QRLIR).

This sequence belongs to the IPP transferase family. Monomer. The cofactor is Mg(2+).

The enzyme catalyses adenosine(37) in tRNA + dimethylallyl diphosphate = N(6)-dimethylallyladenosine(37) in tRNA + diphosphate. Functionally, catalyzes the transfer of a dimethylallyl group onto the adenine at position 37 in tRNAs that read codons beginning with uridine, leading to the formation of N6-(dimethylallyl)adenosine (i(6)A). This chain is tRNA dimethylallyltransferase, found in Chloroherpeton thalassium (strain ATCC 35110 / GB-78).